The primary structure comprises 361 residues: Salt tolerance receptor-like cytoplasmic kinase 1 (361 aa).

Residues Cys5, Cys10, and Cys14 are each lipidated (S-palmitoyl cysteine). Positions Gly67–Leu347 constitute a Protein kinase domain. ATP contacts are provided by residues Ile73–Val81 and Lys95. Asp195 acts as the Proton acceptor in catalysis.

This sequence belongs to the protein kinase superfamily. Ser/Thr protein kinase family. In terms of assembly, self-interacts. Interacts with CATA, CATB and CATC at the plasma membrane. Palmitoylated. Palmotylation at Cys-5, Cys-10 and Cys-14 by DHHC9 is required for plasma membrane targeting and STRK1 function. In terms of processing, autophosphorylated. Accumulates in seeds. Mainly expressed in young roots, and, to a lower extent, in leaf veins, seedlings, stems, leaf sheath and young spikelet.

The protein resides in the cell membrane. It carries out the reaction L-seryl-[protein] + ATP = O-phospho-L-seryl-[protein] + ADP + H(+). It catalyses the reaction L-threonyl-[protein] + ATP = O-phospho-L-threonyl-[protein] + ADP + H(+). The enzyme catalyses L-tyrosyl-[protein] + ATP = O-phospho-L-tyrosyl-[protein] + ADP + H(+). Its function is as follows. Acts probably as a dual specificity protein kinase. Regulates hydrogen peroxide (H(2)O(2)) homeostasis and improves salt tolerance by phosphorylating tyrosine residues of CATC thus activating its catalase activity. Promotes growth at the seedling stage and prevents grain yield loss under salt stress conditions. The polypeptide is Salt tolerance receptor-like cytoplasmic kinase 1 (Oryza sativa subsp. japonica (Rice)).